Consider the following 79-residue polypeptide: MPVAVGPYGQSQPSCFDRVKMGFVMGCAVGMAAGALFGTFSCLRIGMRGRELMGGIGKTMMQSGGTFGTFMAIGMGIRC.

A helical transmembrane segment spans residues 22–44 (GFVMGCAVGMAAGALFGTFSCLR). Positions 42–60 (CLRIGMRGRELMGGIGKTM) are sufficient for antibacterial activity.

The protein belongs to the MGR2 family.

The protein resides in the mitochondrion inner membrane. Functionally, has antibacterial activity against a variety of bacteria including S.aureus, P.aeruginosa and M.tuberculosis. Acts by inducing bacterial membrane breakage. In terms of biological role, induces production of reactive oxygen species (ROS) which are necessary for cell proliferation. May play a role in inducing oxidative DNA damage and replicative senescence. May play a role in the coordination of mitochondrial morphology and cell proliferation. The chain is Reactive oxygen species modulator 1 (ROMO1) from Bos taurus (Bovine).